We begin with the raw amino-acid sequence, 333 residues long: Replication factor C subunit 2 (333 aa).

A2 bears the N-acetylalanine mark. Residue G55–T62 coordinates ATP.

It belongs to the activator 1 small subunits family. Heterotetramer of subunits RFC2, RFC3, RFC4 and RFC5 that can form a complex with RFC1.

The protein localises to the nucleus. Its function is as follows. May be involved in DNA replication and thus regulate cell proliferation. The chain is Replication factor C subunit 2 (RFC2) from Arabidopsis thaliana (Mouse-ear cress).